Here is a 128-residue protein sequence, read N- to C-terminus: Cytochrome c-type biogenesis protein CcmE (128 aa).

Residues 1–7 are Cytoplasmic-facing; sequence MKKKHKR. Residues 8–28 form a helical; Signal-anchor for type II membrane protein membrane-spanning segment; sequence LLVASGIFFFLNCIVFFILTI. Residues 29 to 128 lie on the Extracellular side of the membrane; that stretch reads LRENISFFYT…KHDENYMPRK (100 aa). Residues histidine 120 and tyrosine 124 each coordinate heme.

This sequence belongs to the CcmE/CycJ family.

Its subcellular location is the cell membrane. Its function is as follows. Heme chaperone required for the biogenesis of c-type cytochromes. Transiently binds heme delivered by CcmC and transfers the heme to apo-cytochromes in a process facilitated by CcmF and CcmH. This Wolbachia sp. subsp. Brugia malayi (strain TRS) protein is Cytochrome c-type biogenesis protein CcmE.